The following is a 203-amino-acid chain: Proteasome subunit beta 2 (203 aa).

The propeptide at M1 to A9 is removed in mature form; by autocatalysis. The active-site Nucleophile is T10.

This sequence belongs to the peptidase T1B family. In terms of assembly, the 20S proteasome core is composed of 14 alpha and 14 beta subunits that assemble into four stacked heptameric rings, resulting in a barrel-shaped structure. The two inner rings, each composed of seven catalytic beta subunits, are sandwiched by two outer rings, each composed of seven alpha subunits. The catalytic chamber with the active sites is on the inside of the barrel. Has a gated structure, the ends of the cylinder being occluded by the N-termini of the alpha-subunits. Is capped at one or both ends by the proteasome regulatory ATPase, PAN.

It is found in the cytoplasm. It catalyses the reaction Cleavage of peptide bonds with very broad specificity.. Its activity is regulated as follows. The formation of the proteasomal ATPase PAN-20S proteasome complex, via the docking of the C-termini of PAN into the intersubunit pockets in the alpha-rings, triggers opening of the gate for substrate entry. Interconversion between the open-gate and close-gate conformations leads to a dynamic regulation of the 20S proteasome proteolysis activity. Its function is as follows. Component of the proteasome core, a large protease complex with broad specificity involved in protein degradation. The chain is Proteasome subunit beta 2 from Pyrobaculum arsenaticum (strain DSM 13514 / JCM 11321 / PZ6).